Here is a 515-residue protein sequence, read N- to C-terminus: Maturase K (515 aa).

The protein belongs to the intron maturase 2 family. MatK subfamily.

Its subcellular location is the plastid. The protein localises to the chloroplast. Its function is as follows. Usually encoded in the trnK tRNA gene intron. Probably assists in splicing its own and other chloroplast group II introns. This Pinus uncinata (Mountain pine) protein is Maturase K.